The following is a 139-amino-acid chain: Acidic phospholipase A2 H1E6 (139 aa).

The signal sequence occupies residues 1–16 (MRTLWILAVLQVGVEG). Disulfide bonds link Cys-42–Cys-132, Cys-44–Cys-60, Cys-59–Cys-111, Cys-65–Cys-139, Cys-66–Cys-104, Cys-73–Cys-97, and Cys-91–Cys-102. Ca(2+) contacts are provided by Tyr-43, Gly-45, and Gly-47. The active site involves His-63. Asp-64 serves as a coordination point for Ca(2+). The active site involves Asp-105.

Homodimer. The cofactor is Ca(2+). In terms of tissue distribution, expressed by the venom gland.

It is found in the secreted. The enzyme catalyses a 1,2-diacyl-sn-glycero-3-phosphocholine + H2O = a 1-acyl-sn-glycero-3-phosphocholine + a fatty acid + H(+). Functionally, snake venom phospholipase A2 (PLA2) that inhibits ADP-induced platelet aggregation. PLA2 catalyzes the calcium-dependent hydrolysis of the 2-acyl groups in 3-sn-phosphoglycerides. This Calloselasma rhodostoma (Malayan pit viper) protein is Acidic phospholipase A2 H1E6.